A 548-amino-acid chain; its full sequence is SH2B adapter protein 3 (548 aa).

The segment covering Met1–Thr11 has biased composition (polar residues). 3 disordered regions span residues Met1–Ser25, Ser78–Pro108, and Arg128–Trp160. Positions Ser12–Pro21 are enriched in low complexity. 3 positions are modified to phosphoserine: Ser13, Ser102, and Ser129. Over residues Thr137–Ala148 the composition is skewed to polar residues. The PH domain occupies Glu168–Gly279. Residues Pro290 to Gly313 form a disordered region. Ser302 is subject to Phosphoserine. One can recognise an SH2 domain in the interval Trp336–Val434.

Belongs to the SH2B adapter family. Tyrosine phosphorylated.

Links T-cell receptor activation signal to phospholipase C-gamma-1, GRB2 and phosphatidylinositol 3-kinase. This is SH2B adapter protein 3 (Sh2b3) from Mus musculus (Mouse).